The following is a 37-amino-acid chain: Large ribosomal subunit protein bL36 (37 aa).

Belongs to the bacterial ribosomal protein bL36 family.

This Acidovorax ebreus (strain TPSY) (Diaphorobacter sp. (strain TPSY)) protein is Large ribosomal subunit protein bL36.